Here is a 132-residue protein sequence, read N- to C-terminus: MTMTDPIADFLTRLRNANSAYHDEVTLPHSKLKANIAEILKREGYISDYRTEDARVGKSLVVQLKYGPSRERSIAGLRRVSKPGLRVYAKSTNLPRVLGGLGVAIISTSSGLLTDRQAARQGVGGEVLAYVW.

Belongs to the universal ribosomal protein uS8 family. Part of the 30S ribosomal subunit. Contacts proteins S5 and S12.

In terms of biological role, one of the primary rRNA binding proteins, it binds directly to 16S rRNA central domain where it helps coordinate assembly of the platform of the 30S subunit. The sequence is that of Small ribosomal subunit protein uS8 from Mycolicibacterium smegmatis (strain ATCC 700084 / mc(2)155) (Mycobacterium smegmatis).